We begin with the raw amino-acid sequence, 285 residues long: Phospholipid phosphatase 1 (285 aa).

Residues Met-1–Arg-6 lie on the Cytoplasmic side of the membrane. A PDZ-binding; involved in localization to the apical cell membrane motif is present at residues Thr-5 to Leu-7. The chain crosses the membrane as a helical span at residues Leu-7–Leu-27. Residues Thr-28–Thr-53 are Extracellular-facing. Residues Ile-54–Gly-74 form a helical membrane-spanning segment. The Cytoplasmic segment spans residues Glu-75 to Tyr-94. A helical transmembrane segment spans residues Ile-95 to Leu-115. At Thr-116 to Arg-164 the chain is on the extracellular side. Residues Lys-120 to Pro-128 form a phosphatase sequence motif I region. N-linked (GlcNAc...) asparagine glycosylation occurs at Asn-142. A helical membrane pass occupies residues Leu-165 to Tyr-185. The interval Tyr-168 to His-171 is phosphatase sequence motif II. His-171 acts as the Proton donors in catalysis. Residues Leu-186–Arg-196 are Cytoplasmic-facing. The chain crosses the membrane as a helical span at residues Leu-197–Ser-216. The interval Ser-216 to Asp-227 is phosphatase sequence motif III. Residues Arg-217 to Leu-229 are Extracellular-facing. The Nucleophile role is filled by His-223. Residues Thr-230 to Phe-250 form a helical membrane-spanning segment. Residues Lys-251–Pro-285 are Cytoplasmic-facing. Basic and acidic residues predominate over residues Phe-257–Leu-269. The segment at Phe-257 to Pro-285 is disordered. Polar residues predominate over residues His-270–Pro-285.

This sequence belongs to the PA-phosphatase related phosphoesterase family. As to quaternary structure, forms functional homodimers and homooligomers that are not required for substrate recognition and catalytic activity. Can also form heterooligomers with PLPP2 and PLPP3. Post-translationally, N-glycosylated. N-linked sugars are of the complex type. N-glycosylation is not required for the phosphatase activity.

It localises to the cell membrane. The protein localises to the apical cell membrane. The protein resides in the membrane raft. Its subcellular location is the membrane. It is found in the caveola. The catalysed reaction is a 1,2-diacyl-sn-glycero-3-phosphate + H2O = a 1,2-diacyl-sn-glycerol + phosphate. It catalyses the reaction 1,2-dihexadecanoyl-sn-glycero-3-phosphate + H2O = 1,2-dihexadecanoyl-sn-glycerol + phosphate. It carries out the reaction 1,2-di-(9Z-octadecenoyl)-sn-glycero-3-phosphate + H2O = 1,2-di-(9Z-octadecenoyl)-sn-glycerol + phosphate. The enzyme catalyses a monoacyl-sn-glycero-3-phosphate + H2O = a monoacylglycerol + phosphate. The catalysed reaction is (9Z)-octadecenoyl-sn-glycero-3-phosphate + H2O = (9Z-octadecenoyl)-glycerol + phosphate. It catalyses the reaction a 1-acyl-sn-glycero-3-phosphate + H2O = a 1-acyl-sn-glycerol + phosphate. It carries out the reaction 1-(9Z-octadecenoyl)-sn-glycero-3-phosphate + H2O = 1-(9Z-octadecenoyl)-sn-glycerol + phosphate. The enzyme catalyses a 1,2-diacyl-sn-glycerol 3-diphosphate + H2O = a 1,2-diacyl-sn-glycero-3-phosphate + phosphate + H(+). The catalysed reaction is sphing-4-enine 1-phosphate + H2O = sphing-4-enine + phosphate. It catalyses the reaction an N-acylsphing-4-enine 1-phosphate + H2O = an N-acylsphing-4-enine + phosphate. It carries out the reaction N-(octanoyl)-sphing-4-enine-1-phosphate + H2O = N-octanoylsphing-4-enine + phosphate. The enzyme catalyses N-(9Z-octadecenoyl)-ethanolamine phosphate + H2O = N-(9Z-octadecenoyl) ethanolamine + phosphate. The catalysed reaction is 1-hexadecanoyl-2-(9Z-octadecenoyl)-sn-glycero-3-phosphate + H2O = 1-hexadecanoyl-2-(9Z-octadecenoyl)-sn-glycerol + phosphate. Its pathway is lipid metabolism; phospholipid metabolism. Its activity is regulated as follows. Magnesium-independent phospholipid phosphatase. Insensitive to N-ethylmaleimide. Its function is as follows. Magnesium-independent phospholipid phosphatase of the plasma membrane that catalyzes the dephosphorylation of a variety of glycerolipid and sphingolipid phosphate esters including phosphatidate/PA, lysophosphatidate/LPA, diacylglycerol pyrophosphate/DGPP, sphingosine 1-phosphate/S1P and ceramide 1-phosphate/C1P. Also acts on N-oleoyl ethanolamine phosphate/N-(9Z-octadecenoyl)-ethanolamine phosphate, a potential physiological compound. Through its extracellular phosphatase activity allows both the hydrolysis and the cellular uptake of these bioactive lipid mediators from the milieu, regulating signal transduction in different cellular processes. It is for instance essential for the extracellular hydrolysis of S1P and subsequent conversion into intracellular S1P. Involved in the regulation of inflammation, platelets activation, cell proliferation and migration among other processes. May also have an intracellular activity to regulate phospholipid-mediated signaling pathways. This chain is Phospholipid phosphatase 1, found in Sus scrofa (Pig).